Consider the following 263-residue polypeptide: MLRFAVLGHPVAHSLSPAMHAFALESLGLEGSYEAWDTPLEALPGRLKEVRRAFRGVNLTLPLKEAALAHLDWVSPEAQRIGAVNTVLQVEGRLFGFNTDAPGFLEALKAGGIPLKGPALVLGAGGAGRAVAFALREAGLEVWVWNRTPQRALALAEEFGLRAVPLEKAREARLLVNATRVGLEDPSASPLPAELFPEEGAAVDLVYRPLWTRFLREAKAKGLKVQTGLPMLAWQGALAFRLWTGLLPDPSGMEEAARRALGV.

Shikimate is bound by residues 14–16 (SLS) and Thr60. Lys64 (proton acceptor) is an active-site residue. Residues Asn85 and Asp100 each contribute to the shikimate site. Residues 123–127 (GAGGA), 146–151 (NRTPQR), and Leu205 contribute to the NADP(+) site. Tyr207 is a shikimate binding site. Gly228 provides a ligand contact to NADP(+). Gln235 contributes to the shikimate binding site.

Belongs to the shikimate dehydrogenase family. Homodimer.

It catalyses the reaction shikimate + NADP(+) = 3-dehydroshikimate + NADPH + H(+). It functions in the pathway metabolic intermediate biosynthesis; chorismate biosynthesis; chorismate from D-erythrose 4-phosphate and phosphoenolpyruvate: step 4/7. Involved in the biosynthesis of the chorismate, which leads to the biosynthesis of aromatic amino acids. Catalyzes the reversible NADPH linked reduction of 3-dehydroshikimate (DHSA) to yield shikimate (SA). The sequence is that of Shikimate dehydrogenase (NADP(+)) from Thermus thermophilus (strain ATCC 27634 / DSM 579 / HB8).